A 1147-amino-acid polypeptide reads, in one-letter code: Myosin heavy chain IB (1147 aa).

A Myosin motor domain is found at 9 to 677 (RGVDDLVLMP…TLFHLEECLD (669 aa)). 103-110 (GESGAGKT) is a binding site for ATP. S315 bears the Phosphoserine mark. Positions 551-573 (CDALMEALSRCSPHYIRCIKPND) are actin-binding. One can recognise a TH1 domain in the interval 715–900 (KERQRHSVNR…RANIQIGIAT (186 aa)). Disordered regions lie at residues 901–954 (GLPK…YSQP) and 969–1089 (AAVP…APAA). Composition is skewed to gly residues over residues 916–951 (SGGG…GGGY) and 975–1079 (GRGG…GAGR). The 58-residue stretch at 1090–1147 (PAKPQVKALYDYDAQTGDELTFKEGDTIIVHQKDPAGWWEGELNGKRGWVPANYVQDI) folds into the SH3 domain.

The protein belongs to the TRAFAC class myosin-kinesin ATPase superfamily. Myosin family. Myosin I heavy chain is single-headed. Dimer of a heavy and a light chain. Inability to self-assemble into filaments.

Functionally, myosin is a protein that binds to F-actin and has ATPase activity that is activated by F-actin. The protein is Myosin heavy chain IB (MIB) of Acanthamoeba castellanii (Amoeba).